The sequence spans 242 residues: Haloacid dehalogenase-like hydrolase domain-containing protein 3 (242 aa).

It belongs to the HAD-like hydrolase superfamily.

The chain is Haloacid dehalogenase-like hydrolase domain-containing protein 3 (hdhd3) from Danio rerio (Zebrafish).